Reading from the N-terminus, the 876-residue chain is Protein TORMOZ EMBRYO DEFECTIVE (876 aa).

WD repeat units lie at residues G58–S97, G100–Y139, G142–K183, K190–T229, L255–E294, E308–E347, G356–V396, G399–V441, G444–E484, A497–T536, G539–E580, G581–T620, and Q623–D662. The segment at V816–V876 is disordered. The span at E819–V831 shows a compositional bias: basic and acidic residues. A Nuclear localization signal motif is present at residues S848–K855. Positions R849–R864 are enriched in basic residues.

In terms of tissue distribution, preferentially expressed in dividing cells in a variety of tissues and meristematic regions.

It localises to the nucleus. The protein localises to the nucleolus. In terms of biological role, essential protein involved in the regulation of cell division planes during embryogenesis which defines cell patterning, especially longitudinal division planes of the proembryo, probably via the regulation of embryo patterning genes expression patterns. The polypeptide is Protein TORMOZ EMBRYO DEFECTIVE (Arabidopsis thaliana (Mouse-ear cress)).